A 228-amino-acid polypeptide reads, in one-letter code: Urease accessory protein UreF 1 (228 aa).

It belongs to the UreF family. UreD, UreF and UreG form a complex that acts as a GTP-hydrolysis-dependent molecular chaperone, activating the urease apoprotein by helping to assemble the nickel containing metallocenter of UreC. The UreE protein probably delivers the nickel.

The protein localises to the cytoplasm. Required for maturation of urease via the functional incorporation of the urease nickel metallocenter. Its function is as follows. Disruption of the ure1 gene cluster suggests that it protects brucellae during their passage through the stomach. The major route of infection in human brucellosis is oral. In Brucella abortus (strain 2308), this protein is Urease accessory protein UreF 1.